The sequence spans 276 residues: NAD kinase (276 aa).

Asp-61 acts as the Proton acceptor in catalysis. NAD(+) contacts are provided by residues 61–62, Arg-66, 135–136, Arg-146, His-163, Asp-165, and Ala-200; these read DG and NE.

It belongs to the NAD kinase family. A divalent metal cation serves as cofactor.

The protein resides in the cytoplasm. It carries out the reaction NAD(+) + ATP = ADP + NADP(+) + H(+). Its function is as follows. Involved in the regulation of the intracellular balance of NAD and NADP, and is a key enzyme in the biosynthesis of NADP. Catalyzes specifically the phosphorylation on 2'-hydroxyl of the adenosine moiety of NAD to yield NADP. The polypeptide is NAD kinase (Chloroflexus aggregans (strain MD-66 / DSM 9485)).